A 279-amino-acid chain; its full sequence is Thymidylate synthase (279 aa).

133–134 (RR) provides a ligand contact to dUMP. The active-site Nucleophile is Cys-154. DUMP is bound by residues 178–181 (RSND), Asn-189, and 219–221 (HIY). Asp-181 is a (6R)-5,10-methylene-5,6,7,8-tetrahydrofolate binding site. Ala-278 is a binding site for (6R)-5,10-methylene-5,6,7,8-tetrahydrofolate.

This sequence belongs to the thymidylate synthase family. Bacterial-type ThyA subfamily. As to quaternary structure, homodimer.

The protein resides in the cytoplasm. It carries out the reaction dUMP + (6R)-5,10-methylene-5,6,7,8-tetrahydrofolate = 7,8-dihydrofolate + dTMP. Its pathway is pyrimidine metabolism; dTTP biosynthesis. Its function is as follows. Catalyzes the reductive methylation of 2'-deoxyuridine-5'-monophosphate (dUMP) to 2'-deoxythymidine-5'-monophosphate (dTMP) while utilizing 5,10-methylenetetrahydrofolate (mTHF) as the methyl donor and reductant in the reaction, yielding dihydrofolate (DHF) as a by-product. This enzymatic reaction provides an intracellular de novo source of dTMP, an essential precursor for DNA biosynthesis. The polypeptide is Thymidylate synthase (Streptococcus gordonii (strain Challis / ATCC 35105 / BCRC 15272 / CH1 / DL1 / V288)).